Here is a 277-residue protein sequence, read N- to C-terminus: MALFIFLILVGYLMGSINSAIIVCRTFGLPDPREEGSKNPGATNVLRLGGKQYGIMVMVFDALKGILPVILAKLLSAEPVTVAFTALAAVVGHMYPVFFHFRGGKGVATTIGALLAFHFVIGVMVAATWLLVANFWRYSSLASIASISLAPFYSLILVGNLNIFPPLFMITILVLYKHRDNFNRLIDGKEPKIKFKHSVIEEIMEASPATSAEQEFPGKEVIDTNIDETEKTEQAEAVKKPKVKKATTKAKKTTSKEETTKKPKSTKPKTKTVKEKE.

5 helical membrane passes run 3-23 (LFIF…AIIV), 55-75 (IMVM…AKLL), 79-99 (PVTV…PVFF), 111-131 (IGAL…TWLL), and 155-175 (LILV…ILVL). The interval 207–277 (SPATSAEQEF…PKTKTVKEKE (71 aa)) is disordered. Residues 216–239 (FPGKEVIDTNIDETEKTEQAEAVK) are compositionally biased toward basic and acidic residues. Composition is skewed to basic residues over residues 240–253 (KPKV…AKKT) and 262–271 (KPKSTKPKTK).

It belongs to the PlsY family. As to quaternary structure, probably interacts with PlsX.

It is found in the cell inner membrane. The enzyme catalyses an acyl phosphate + sn-glycerol 3-phosphate = a 1-acyl-sn-glycero-3-phosphate + phosphate. The protein operates within lipid metabolism; phospholipid metabolism. Functionally, catalyzes the transfer of an acyl group from acyl-phosphate (acyl-PO(4)) to glycerol-3-phosphate (G3P) to form lysophosphatidic acid (LPA). This enzyme utilizes acyl-phosphate as fatty acyl donor, but not acyl-CoA or acyl-ACP. The polypeptide is Glycerol-3-phosphate acyltransferase (Legionella pneumophila (strain Corby)).